A 499-amino-acid chain; its full sequence is Cysteine--tRNA ligase (499 aa).

Cys29 is a Zn(2+) binding site. A 'HIGH' region motif is present at residues 31 to 41 (VTVYDLCHLGH). Residues Cys213, His238, and Glu242 each coordinate Zn(2+). A 'KMSKS' region motif is present at residues 270-274 (KMSKS). Lys273 provides a ligand contact to ATP.

Belongs to the class-I aminoacyl-tRNA synthetase family. As to quaternary structure, monomer. Zn(2+) is required as a cofactor.

It is found in the cytoplasm. The enzyme catalyses tRNA(Cys) + L-cysteine + ATP = L-cysteinyl-tRNA(Cys) + AMP + diphosphate. The polypeptide is Cysteine--tRNA ligase (Prochlorococcus marinus (strain MIT 9303)).